A 90-amino-acid polypeptide reads, in one-letter code: Probable Fe(2+)-trafficking protein (90 aa).

The protein belongs to the Fe(2+)-trafficking protein family. As to quaternary structure, monomer.

Its function is as follows. Could be a mediator in iron transactions between iron acquisition and iron-requiring processes, such as synthesis and/or repair of Fe-S clusters in biosynthetic enzymes. This Pectobacterium carotovorum subsp. carotovorum (strain PC1) protein is Probable Fe(2+)-trafficking protein.